A 517-amino-acid polypeptide reads, in one-letter code: Forkhead box protein N4 (517 aa).

Residues 193-289 constitute a DNA-binding region (fork-head); sequence KPIYSYSCLI…EEMHKWKRKD (97 aa). 2 disordered regions span residues 365-398 and 497-517; these read VQPQAHLAPDSPAPAQTPPLHALPDLSPSPLPHP and SGTSSSSQYLGAQGNKPIALL.

It is found in the nucleus. Transcription factor essential for neural and some non-neural tissues development, such as retina and lung respectively. Binds to an 11-bp consensus sequence containing the invariant tetranucleotide 5'-ACGC-3'. During development of the central nervous system, is required to specify the amacrine and horizontal cell fates from multipotent retinal progenitors while suppressing the alternative photoreceptor cell fates through activating DLL4-NOTCH signaling. Also acts synergistically with ASCL1/MASH1 to activate DLL4-NOTCH signaling and drive commitment of p2 progenitors to the V2b interneuron fates during spinal cord neurogenesis. In development of non-neural tissues, plays an essential role in the specification of the atrioventricular canal and is indirectly required for patterning the distal airway during lung development. The protein is Forkhead box protein N4 (FOXN4) of Homo sapiens (Human).